The following is a 349-amino-acid chain: tRNA pseudouridine synthase D (349 aa).

Phenylalanine 27 serves as a coordination point for substrate. The active-site Nucleophile is the aspartate 80. A substrate-binding site is contributed by asparagine 129. Positions 155–303 (GVPNYFGAQR…VEAARRAMLL (149 aa)) constitute a TRUD domain. Phenylalanine 329 contacts substrate.

It belongs to the pseudouridine synthase TruD family.

It carries out the reaction uridine(13) in tRNA = pseudouridine(13) in tRNA. Functionally, responsible for synthesis of pseudouridine from uracil-13 in transfer RNAs. The protein is tRNA pseudouridine synthase D of Shigella sonnei (strain Ss046).